The sequence spans 702 residues: Lipase maturation factor 2 (702 aa).

Transmembrane regions (helical) follow at residues 10-30, 75-95, 164-184, 226-246, 259-279, 316-336, 363-383, and 398-418; these read LFLQGVAAVYLFAFASLYTQI, AQGLDLLTLLGTVLALGALLL, DLPFWLVRWLLFRLMFASGVV, LSVVATFLIEIAVPPLFFAPI, LLQVLIIITGNYNFFNLLTLV, LLLELTVYGLLAYGTVYYFGL, VTLPTVWLGTASLAWELLVVL, and AGIQLSVLGTATVALFLISLV. Asn488 is a glycosylation site (N-linked (GlcNAc...) asparagine). The chain crosses the membrane as a helical span at residues 636-656; sequence ILLWGLFGAVVAIRVVQTLLA. The disordered stretch occupies residues 660–702; sequence LQSSKQTREEKRKQTSKKDSRAASEQAAANSNSRDSWAPRRKK. Over residues 665–681 the composition is skewed to basic and acidic residues; the sequence is QTREEKRKQTSKKDSRA. Over residues 682–693 the composition is skewed to low complexity; the sequence is ASEQAAANSNSR.

This sequence belongs to the lipase maturation factor family.

The protein resides in the endoplasmic reticulum membrane. Functionally, involved in the maturation of specific proteins in the endoplasmic reticulum. May be required for maturation and transport of active lipoprotein lipase (LPL) through the secretory pathway. The protein is Lipase maturation factor 2 (Lmf2) of Mus musculus (Mouse).